Here is a 396-residue protein sequence, read N- to C-terminus: Apurinic-apyrimidinic endonuclease (396 aa).

Over residues 31-41 (KGRGKIQKHIQ) the composition is skewed to basic residues. The disordered stretch occupies residues 31–100 (KGRGKIQKHI…TSGETIAQKK (70 aa)). A compositionally biased stretch (polar residues) spans 55–70 (NQSPGTTVEETLTEEN). Residues 72–85 (STDKEETSKLENKP) are compositionally biased toward basic and acidic residues. Zn(2+) contacts are provided by histidine 185, histidine 225, glutamate 261, aspartate 295, histidine 298, histidine 332, aspartate 345, histidine 347, and glutamate 377.

The protein belongs to the AP endonuclease 2 family. Zn(2+) serves as cofactor.

It localises to the nucleus. The sequence is that of Apurinic-apyrimidinic endonuclease (apn-1) from Caenorhabditis elegans.